Consider the following 473-residue polypeptide: ATP synthase subunit beta (473 aa).

Residue 158 to 165 (GGAGVGKT) coordinates ATP.

Belongs to the ATPase alpha/beta chains family. As to quaternary structure, F-type ATPases have 2 components, CF(1) - the catalytic core - and CF(0) - the membrane proton channel. CF(1) has five subunits: alpha(3), beta(3), gamma(1), delta(1), epsilon(1). CF(0) has three main subunits: a(1), b(2) and c(9-12). The alpha and beta chains form an alternating ring which encloses part of the gamma chain. CF(1) is attached to CF(0) by a central stalk formed by the gamma and epsilon chains, while a peripheral stalk is formed by the delta and b chains. The F(1)F(0) complex interacts with SpoIIIJ and YqjG; YqgA is found in the same complex.

Its subcellular location is the cell membrane. It localises to the membrane raft. It catalyses the reaction ATP + H2O + 4 H(+)(in) = ADP + phosphate + 5 H(+)(out). In terms of biological role, produces ATP from ADP in the presence of a proton gradient across the membrane. The catalytic sites are hosted primarily by the beta subunits. The sequence is that of ATP synthase subunit beta from Bacillus subtilis (strain 168).